A 236-amino-acid chain; its full sequence is C-&gt;U-editing enzyme APOBEC-1 (236 aa).

The region spanning 10–134 is the CMP/dCMP-type deaminase domain; the sequence is GDPTLRRRIE…QQNRQGLRDL (125 aa). His-61 is a Zn(2+) binding site. Glu-63 acts as the Proton donor in catalysis. The Zn(2+) site is built by Cys-93 and Cys-96.

Belongs to the cytidine and deoxycytidylate deaminase family. As to quaternary structure, homodimer. Interacts with A1CF; form an mRNA editing complex. Interacts with RBM47; form an mRNA editing complex. Found in a complex with CELF2/CUGBP2 and A1CF. Interacts with HNRPAB. Interacts with SYNCRIP. Zn(2+) serves as cofactor. As to expression, expressed exclusively in the small intestine.

The protein resides in the cytoplasm. Its subcellular location is the nucleus. The catalysed reaction is a cytidine in mRNA + H2O + H(+) = a uridine in mRNA + NH4(+). The enzyme catalyses cytidine(6666) in apoB mRNA + H2O + H(+) = uridine(6666) in apoB mRNA + NH4(+). Its function is as follows. Cytidine deaminase catalyzing the cytidine to uridine postranscriptional editing of a variety of mRNAs. Form complexes with cofactors that confer differential editing activity and selectivity. Responsible for the postranscriptional editing of a CAA codon for Gln to a UAA codon for stop in the apolipoprotein B mRNA. Also involved in CGA (Arg) to UGA (Stop) editing in the NF1 mRNA. May also play a role in the epigenetic regulation of gene expression by participating in DNA demethylation. The polypeptide is C-&gt;U-editing enzyme APOBEC-1 (Homo sapiens (Human)).